The sequence spans 346 residues: Large ribosomal subunit protein uL10 (346 aa).

The interval 307–346 is disordered; the sequence is AAAVAKEPEKKEEVKEEEEEEEEEDHSEEDGMAGLGSLFG. The span at 321–337 shows a compositional bias: acidic residues; it reads KEEEEEEEEEDHSEEDG.

Belongs to the universal ribosomal protein uL10 family. As to quaternary structure, part of the 50S ribosomal subunit. Forms part of the ribosomal stalk which helps the ribosome interact with GTP-bound translation factors. Forms both a pentameric L10(L12)2(L12)2 and heptameric L10(L12)2(L12)2(L12)2 complex, where L10 forms an elongated spine to which the L12 dimers bind in a sequential fashion. The proportion of heptameric complexes increases during cell growth.

Functionally, forms part of the ribosomal stalk, playing a central role in the interaction of the ribosome with GTP-bound translation factors. This chain is Large ribosomal subunit protein uL10, found in Methanosarcina barkeri (strain Fusaro / DSM 804).